We begin with the raw amino-acid sequence, 572 residues long: Flagellin A (572 aa).

It belongs to the bacterial flagellin family. As to quaternary structure, heteromer of FlaA and FlaB. Interacts with FliW.

The protein localises to the secreted. It localises to the bacterial flagellum. Its function is as follows. Flagellin is the subunit protein which polymerizes to form the filaments of bacterial flagella. FlaA binds to flagellar assembly factor FliW protein, preventing FliW from binding to CsrA, so that CsrA can then bind flaA mRNA and represses its translation. The sequence is that of Flagellin A (flaA) from Campylobacter jejuni subsp. jejuni serotype O:2 (strain ATCC 700819 / NCTC 11168).